Here is a 611-residue protein sequence, read N- to C-terminus: Procollagen galactosyltransferase 1-A (611 aa).

The first 24 residues, 1 to 24 (MSQAGVDRLLRGLQLLLLVLRLSA), serve as a signal peptide directing secretion. Residues asparagine 85, asparagine 173, asparagine 312, asparagine 370, and asparagine 568 are each glycosylated (N-linked (GlcNAc...) asparagine). Residues 575–591 (WDRAKSRKTQQQEKLRS) show a composition bias toward basic and acidic residues. The disordered stretch occupies residues 575–611 (WDRAKSRKTQQQEKLRSEALNSPSLGSPFDNTARDEL). The short motif at 608–611 (RDEL) is the Prevents secretion from ER element.

Belongs to the glycosyltransferase 25 family.

The protein localises to the endoplasmic reticulum lumen. The catalysed reaction is (5R)-5-hydroxy-L-lysyl-[collagen] + UDP-alpha-D-galactose = (5R)-5-O-(beta-D-galactosyl)-5-hydroxy-L-lysyl-[collagen] + UDP + H(+). In terms of biological role, beta-galactosyltransferase that transfers beta-galactose to hydroxylysine residues of type I collagen. By acting on collagen glycosylation, facilitates the formation of collagen triple helix. The protein is Procollagen galactosyltransferase 1-A (colgalt1-a) of Xenopus laevis (African clawed frog).